A 325-amino-acid chain; its full sequence is ATP phosphoribosyltransferase (325 aa).

Belongs to the ATP phosphoribosyltransferase family. Long subfamily. The cofactor is Mg(2+).

The protein resides in the cytoplasm. It carries out the reaction 1-(5-phospho-beta-D-ribosyl)-ATP + diphosphate = 5-phospho-alpha-D-ribose 1-diphosphate + ATP. The protein operates within amino-acid biosynthesis; L-histidine biosynthesis; L-histidine from 5-phospho-alpha-D-ribose 1-diphosphate: step 1/9. Its activity is regulated as follows. Feedback inhibited by histidine. In terms of biological role, catalyzes the condensation of ATP and 5-phosphoribose 1-diphosphate to form N'-(5'-phosphoribosyl)-ATP (PR-ATP). Has a crucial role in the pathway because the rate of histidine biosynthesis seems to be controlled primarily by regulation of HisG enzymatic activity. This chain is ATP phosphoribosyltransferase, found in Afipia carboxidovorans (strain ATCC 49405 / DSM 1227 / KCTC 32145 / OM5) (Oligotropha carboxidovorans).